Consider the following 689-residue polypeptide: Elongation factor G (689 aa).

The region spanning 8-282 (ENTRNLGIMA…AVVDYLPSPL (275 aa)) is the tr-type G domain. GTP-binding positions include 17–24 (AHIDAGKT), 81–85 (DTPGH), and 135–138 (NKMD).

Belongs to the TRAFAC class translation factor GTPase superfamily. Classic translation factor GTPase family. EF-G/EF-2 subfamily.

Its subcellular location is the cytoplasm. Its function is as follows. Catalyzes the GTP-dependent ribosomal translocation step during translation elongation. During this step, the ribosome changes from the pre-translocational (PRE) to the post-translocational (POST) state as the newly formed A-site-bound peptidyl-tRNA and P-site-bound deacylated tRNA move to the P and E sites, respectively. Catalyzes the coordinated movement of the two tRNA molecules, the mRNA and conformational changes in the ribosome. This chain is Elongation factor G, found in Mesoplasma florum (strain ATCC 33453 / NBRC 100688 / NCTC 11704 / L1) (Acholeplasma florum).